A 243-amino-acid polypeptide reads, in one-letter code: Exosome complex component Rrp41 (243 aa).

The protein belongs to the RNase PH family. Rrp41 subfamily. Component of the archaeal exosome complex. Forms a hexameric ring-like arrangement composed of 3 Rrp41-Rrp42 heterodimers. The hexameric ring associates with a trimer of Rrp4 and/or Csl4 subunits.

The protein resides in the cytoplasm. Functionally, catalytic component of the exosome, which is a complex involved in RNA degradation. Has 3'-&gt;5' exoribonuclease activity. Can also synthesize heteromeric RNA-tails. This Cenarchaeum symbiosum (strain A) protein is Exosome complex component Rrp41.